A 257-amino-acid chain; its full sequence is Thiazole synthase (257 aa).

The active-site Schiff-base intermediate with DXP is the Lys-96. Residues Gly-157, 184-185 (AG), and 206-207 (NT) contribute to the 1-deoxy-D-xylulose 5-phosphate site.

It belongs to the ThiG family. As to quaternary structure, homotetramer. Forms heterodimers with either ThiH or ThiS.

The protein resides in the cytoplasm. The catalysed reaction is [ThiS sulfur-carrier protein]-C-terminal-Gly-aminoethanethioate + 2-iminoacetate + 1-deoxy-D-xylulose 5-phosphate = [ThiS sulfur-carrier protein]-C-terminal Gly-Gly + 2-[(2R,5Z)-2-carboxy-4-methylthiazol-5(2H)-ylidene]ethyl phosphate + 2 H2O + H(+). It participates in cofactor biosynthesis; thiamine diphosphate biosynthesis. Its function is as follows. Catalyzes the rearrangement of 1-deoxy-D-xylulose 5-phosphate (DXP) to produce the thiazole phosphate moiety of thiamine. Sulfur is provided by the thiocarboxylate moiety of the carrier protein ThiS. In vitro, sulfur can be provided by H(2)S. The polypeptide is Thiazole synthase (Bartonella bacilliformis (strain ATCC 35685 / KC583 / Herrer 020/F12,63)).